The chain runs to 343 residues: KRR1 small subunit processome component homolog (343 aa).

The KH domain occupies aspartate 125–asparagine 193. Residues asparagine 232 to lysine 245 are compositionally biased toward basic residues. The interval asparagine 232 to valine 343 is disordered. Positions phenylalanine 270 to aspartate 302 form a coiled coil. Residues leucine 271–aspartate 302 show a composition bias toward basic and acidic residues. The span at leucine 331–valine 343 shows a compositional bias: basic residues.

It belongs to the KRR1 family. As to quaternary structure, monomer. Component of the ribosomal small subunit (SSU) processome.

It localises to the nucleus. The protein localises to the nucleolus. Its function is as follows. Required for 40S ribosome biogenesis. Involved in nucleolar processing of pre-18S ribosomal RNA and ribosome assembly. Binds to RNA. Required for female germline development, cell viability during eye development and for survival of dividing cells and epithelial cells during early wing disk development. This is KRR1 small subunit processome component homolog from Drosophila ananassae (Fruit fly).